Reading from the N-terminus, the 727-residue chain is Prolyl endopeptidase-like (727 aa).

Residues S559, D645, and H690 each act as charge relay system in the active site.

This sequence belongs to the peptidase S9A family. As to quaternary structure, homodimer. Interacts with the AP-1 complex.

Its subcellular location is the cytoplasm. The protein localises to the cytosol. It is found in the golgi apparatus. The protein resides in the trans-Golgi network. It localises to the cytoskeleton. Its subcellular location is the nucleus. Its function is as follows. Serine peptidase whose precise substrate specificity remains unclear. Does not cleave peptides after a arginine or lysine residue. Regulates trans-Golgi network morphology and sorting by regulating the membrane binding of the AP-1 complex. May play a role in the regulation of synaptic vesicle exocytosis. The polypeptide is Prolyl endopeptidase-like (PREPL) (Pongo abelii (Sumatran orangutan)).